We begin with the raw amino-acid sequence, 868 residues long: DNA topoisomerase 1 (868 aa).

One can recognise a Toprim domain in the interval 3–148 (KSLVIVESPA…RFSRVVFNEI (146 aa)). Residues glutamate 9 and aspartate 117 each contribute to the Mg(2+) site. The region spanning 164–581 (NLDRVNAQQT…QFFKDFSQQL (418 aa)) is the Topo IA-type catalytic domain. Residues 198-203 (SAGRVQ) are interaction with DNA. Tyrosine 325 serves as the catalytic O-(5'-phospho-DNA)-tyrosine intermediate. 3 consecutive C4-type zinc fingers follow at residues 605-636 (CPTC…KERC), 667-694 (CPKC…NPNC), and 716-739 (CDKC…CTSC).

This sequence belongs to the type IA topoisomerase family. Monomer. The cofactor is Mg(2+).

It carries out the reaction ATP-independent breakage of single-stranded DNA, followed by passage and rejoining.. Functionally, releases the supercoiling and torsional tension of DNA, which is introduced during the DNA replication and transcription, by transiently cleaving and rejoining one strand of the DNA duplex. Introduces a single-strand break via transesterification at a target site in duplex DNA. The scissile phosphodiester is attacked by the catalytic tyrosine of the enzyme, resulting in the formation of a DNA-(5'-phosphotyrosyl)-enzyme intermediate and the expulsion of a 3'-OH DNA strand. The free DNA strand then undergoes passage around the unbroken strand, thus removing DNA supercoils. Finally, in the religation step, the DNA 3'-OH attacks the covalent intermediate to expel the active-site tyrosine and restore the DNA phosphodiester backbone. In Pasteurella multocida (strain Pm70), this protein is DNA topoisomerase 1.